The sequence spans 179 residues: Protein PLASTID REDOX INSENSITIVE 2, chloroplastic (179 aa).

The transit peptide at 1–69 directs the protein to the chloroplast; sequence MASMHEALFS…SLSRRGFVCR (69 aa).

Binds DNA when in complex with CSP41b.

It localises to the plastid. It is found in the chloroplast stroma. The protein resides in the chloroplast nucleoid. Its function is as follows. Involved in redox-mediated retrograde signaling to synchronize the expression of photosynthetic genes from both the nuclear and plastidic genomes, especially in excess light conditions. Required for full expression of genes transcribed by the plastid-encoded RNA polymerase (PEP). Essential for embryo development. The chain is Protein PLASTID REDOX INSENSITIVE 2, chloroplastic from Arabidopsis thaliana (Mouse-ear cress).